The chain runs to 635 residues: 1-deoxy-D-xylulose-5-phosphate synthase (635 aa).

Residues histidine 79 and 120 to 122 (GHS) contribute to the thiamine diphosphate site. Aspartate 151 contacts Mg(2+). Residues 152–153 (GA), asparagine 182, tyrosine 290, and glutamate 372 contribute to the thiamine diphosphate site. Mg(2+) is bound at residue asparagine 182.

The protein belongs to the transketolase family. DXPS subfamily. As to quaternary structure, homodimer. Mg(2+) serves as cofactor. The cofactor is thiamine diphosphate.

It carries out the reaction D-glyceraldehyde 3-phosphate + pyruvate + H(+) = 1-deoxy-D-xylulose 5-phosphate + CO2. The protein operates within metabolic intermediate biosynthesis; 1-deoxy-D-xylulose 5-phosphate biosynthesis; 1-deoxy-D-xylulose 5-phosphate from D-glyceraldehyde 3-phosphate and pyruvate: step 1/1. Functionally, catalyzes the acyloin condensation reaction between C atoms 2 and 3 of pyruvate and glyceraldehyde 3-phosphate to yield 1-deoxy-D-xylulose-5-phosphate (DXP). This is 1-deoxy-D-xylulose-5-phosphate synthase from Stenotrophomonas maltophilia (strain K279a).